We begin with the raw amino-acid sequence, 333 residues long: tRNA N6-adenosine threonylcarbamoyltransferase (333 aa).

Positions 111 and 115 each coordinate Fe cation. Substrate contacts are provided by residues 134-138, D167, G180, D184, and N273; that span reads VVSGG. D302 is a binding site for Fe cation.

This sequence belongs to the KAE1 / TsaD family. Requires Fe(2+) as cofactor.

It localises to the cytoplasm. The enzyme catalyses L-threonylcarbamoyladenylate + adenosine(37) in tRNA = N(6)-L-threonylcarbamoyladenosine(37) in tRNA + AMP + H(+). Functionally, required for the formation of a threonylcarbamoyl group on adenosine at position 37 (t(6)A37) in tRNAs that read codons beginning with adenine. Is involved in the transfer of the threonylcarbamoyl moiety of threonylcarbamoyl-AMP (TC-AMP) to the N6 group of A37, together with TsaE and TsaB. TsaD likely plays a direct catalytic role in this reaction. In Anaeromyxobacter sp. (strain Fw109-5), this protein is tRNA N6-adenosine threonylcarbamoyltransferase.